Consider the following 340-residue polypeptide: Glycerol-3-phosphate dehydrogenase [NAD(P)+] (340 aa).

NADPH contacts are provided by Ser13, Tyr14, and Lys108. Residues Lys108, Gly137, and Thr139 each contribute to the sn-glycerol 3-phosphate site. Ala141 contacts NADPH. The sn-glycerol 3-phosphate site is built by Lys193, Asp246, Ser256, Arg257, and Asn258. The Proton acceptor role is filled by Lys193. Residue Arg257 coordinates NADPH. Ile281 and Glu283 together coordinate NADPH.

The protein belongs to the NAD-dependent glycerol-3-phosphate dehydrogenase family.

The protein resides in the cytoplasm. The enzyme catalyses sn-glycerol 3-phosphate + NAD(+) = dihydroxyacetone phosphate + NADH + H(+). It carries out the reaction sn-glycerol 3-phosphate + NADP(+) = dihydroxyacetone phosphate + NADPH + H(+). The protein operates within membrane lipid metabolism; glycerophospholipid metabolism. Functionally, catalyzes the reduction of the glycolytic intermediate dihydroxyacetone phosphate (DHAP) to sn-glycerol 3-phosphate (G3P), the key precursor for phospholipid synthesis. The chain is Glycerol-3-phosphate dehydrogenase [NAD(P)+] from Bartonella henselae (strain ATCC 49882 / DSM 28221 / CCUG 30454 / Houston 1) (Rochalimaea henselae).